Reading from the N-terminus, the 516-residue chain is Glucose-1-phosphate adenylyltransferase large subunit 1, chloroplastic/amyloplastic (516 aa).

The transit peptide at 1–45 directs the protein to the chloroplast; sequence MQFALALDTNSGPHQIRSCEGDGIDRLEKLSIGGRKQEKALRNRC.

Belongs to the bacterial/plant glucose-1-phosphate adenylyltransferase family. Heterotetramer. Endosperm.

It is found in the plastid. The protein localises to the chloroplast. The protein resides in the amyloplast. The catalysed reaction is alpha-D-glucose 1-phosphate + ATP + H(+) = ADP-alpha-D-glucose + diphosphate. The protein operates within glycan biosynthesis; starch biosynthesis. With respect to regulation, activated by 3'phosphoglycerate, inhibited by orthophosphate. Allosteric regulation. In terms of biological role, this protein plays a role in synthesis of starch. It catalyzes the synthesis of the activated glycosyl donor, ADP-glucose from Glc-1-P and ATP. This Zea mays (Maize) protein is Glucose-1-phosphate adenylyltransferase large subunit 1, chloroplastic/amyloplastic (SH2).